Here is a 137-residue protein sequence, read N- to C-terminus: Small ribosomal subunit protein bS6 (137 aa).

The protein belongs to the bacterial ribosomal protein bS6 family.

In terms of biological role, binds together with bS18 to 16S ribosomal RNA. In Sulfurimonas denitrificans (strain ATCC 33889 / DSM 1251) (Thiomicrospira denitrificans (strain ATCC 33889 / DSM 1251)), this protein is Small ribosomal subunit protein bS6.